The primary structure comprises 185 residues: Large ribosomal subunit protein uL5 (185 aa).

It belongs to the universal ribosomal protein uL5 family. As to quaternary structure, part of the 50S ribosomal subunit; part of the 5S rRNA/L5/L18/L25 subcomplex. Contacts the 5S rRNA and the P site tRNA. Forms a bridge to the 30S subunit in the 70S ribosome.

Functionally, this is one of the proteins that bind and probably mediate the attachment of the 5S RNA into the large ribosomal subunit, where it forms part of the central protuberance. In the 70S ribosome it contacts protein S13 of the 30S subunit (bridge B1b), connecting the 2 subunits; this bridge is implicated in subunit movement. Contacts the P site tRNA; the 5S rRNA and some of its associated proteins might help stabilize positioning of ribosome-bound tRNAs. This chain is Large ribosomal subunit protein uL5, found in Rhizobium etli (strain ATCC 51251 / DSM 11541 / JCM 21823 / NBRC 15573 / CFN 42).